The chain runs to 458 residues: MPN domain-containing protein (458 aa).

Positions 1 to 37 (MGSEPPSSPQVVEEGADEEDEELSGAEDADLRSSSGR) are disordered. The segment covering 14 to 28 (EGADEEDEELSGAED) has biased composition (acidic residues). An RAMA domain is found at 42 to 137 (TRRGITLRVL…QYKTTWLHKY (96 aa)). The DNA site is built by serine 94, serine 96, and tryptophan 116. A disordered region spans residues 147-175 (SEGEDDEMGDDDEEEGKTTIPVEDKNKKS). The segment covering 148–161 (EGEDDEMGDDDEEE) has biased composition (acidic residues). The 136-residue stretch at 229-364 (VAVSSNVLLL…VASTITPFWV (136 aa)) folds into the MPN domain. Residues histidine 306, histidine 308, and aspartate 319 each contribute to the Zn(2+) site. Residues 306-319 (HSHPRGPALPSLQD) carry the JAMM motif motif.

This sequence belongs to the peptidase M67 family. In terms of processing, degraded following binding to N(6)-methyladenosine methylated DNA (m6A).

Its function is as follows. Probable protease. Acts as a sensor of N(6)-methyladenosine methylation on DNA (m6A): recognizes and binds m6A DNA, leading to its degradation. Binds only double strand DNA (dsDNA) in a sequence-independent manner. This Danio rerio (Zebrafish) protein is MPN domain-containing protein.